The chain runs to 153 residues: Ribosome maturation factor RimP (153 aa).

This sequence belongs to the RimP family.

The protein localises to the cytoplasm. Functionally, required for maturation of 30S ribosomal subunits. The polypeptide is Ribosome maturation factor RimP (Christiangramia forsetii (strain DSM 17595 / CGMCC 1.15422 / KT0803) (Gramella forsetii)).